A 431-amino-acid polypeptide reads, in one-letter code: Enolase (431 aa).

Residue Q166 coordinates (2R)-2-phosphoglycerate. Residue E208 is the Proton donor of the active site. Positions 245, 288, and 315 each coordinate Mg(2+). (2R)-2-phosphoglycerate-binding residues include K340, R369, S370, and K391. Catalysis depends on K340, which acts as the Proton acceptor.

It belongs to the enolase family. The cofactor is Mg(2+).

It localises to the cytoplasm. Its subcellular location is the secreted. The protein localises to the cell surface. It carries out the reaction (2R)-2-phosphoglycerate = phosphoenolpyruvate + H2O. It functions in the pathway carbohydrate degradation; glycolysis; pyruvate from D-glyceraldehyde 3-phosphate: step 4/5. In terms of biological role, catalyzes the reversible conversion of 2-phosphoglycerate (2-PG) into phosphoenolpyruvate (PEP). It is essential for the degradation of carbohydrates via glycolysis. The chain is Enolase from Clostridium botulinum (strain Kyoto / Type A2).